A 321-amino-acid chain; its full sequence is Acetyl-coenzyme A carboxylase carboxyl transferase subunit alpha (321 aa).

In terms of domain architecture, CoA carboxyltransferase C-terminal spans 32 to 293 (DISEEIARLQ…KRVLQDQLKE (262 aa)).

The protein belongs to the AccA family. As to quaternary structure, acetyl-CoA carboxylase is a heterohexamer composed of biotin carboxyl carrier protein (AccB), biotin carboxylase (AccC) and two subunits each of ACCase subunit alpha (AccA) and ACCase subunit beta (AccD).

Its subcellular location is the cytoplasm. The catalysed reaction is N(6)-carboxybiotinyl-L-lysyl-[protein] + acetyl-CoA = N(6)-biotinyl-L-lysyl-[protein] + malonyl-CoA. Its pathway is lipid metabolism; malonyl-CoA biosynthesis; malonyl-CoA from acetyl-CoA: step 1/1. Functionally, component of the acetyl coenzyme A carboxylase (ACC) complex. First, biotin carboxylase catalyzes the carboxylation of biotin on its carrier protein (BCCP) and then the CO(2) group is transferred by the carboxyltransferase to acetyl-CoA to form malonyl-CoA. The protein is Acetyl-coenzyme A carboxylase carboxyl transferase subunit alpha of Chromobacterium violaceum (strain ATCC 12472 / DSM 30191 / JCM 1249 / CCUG 213 / NBRC 12614 / NCIMB 9131 / NCTC 9757 / MK).